The sequence spans 5125 residues: Usherin (5125 aa).

Positions 1–33 (MYYLALSSGFLGQAIKTSILAYLASVLLAASQG) are cleaved as a signal peptide. N120, N229, N257, N273, N414, N447, and N468 each carry an N-linked (GlcNAc...) asparagine glycan. One can recognise a Laminin N-terminal domain in the interval 273 to 513 (NVSLTNREIL…AVDEITIIGR (241 aa)). 39 disulfides stabilise this stretch: C514–C523, C516–C532, C534–C545, C548–C568, C571–C580, C573–C601, C604–C613, C616–C634, C637–C651, C639–C658, C660–C669, C672–C687, C690–C704, C692–C711, C713–C722, C725–C740, C743–C755, C745–C762, C764–C773, C776–C788, C791–C804, C793–C811, C813–C822, C825–C840, C843–C857, C845–C864, C866–C875, C878–C893, C896–C909, C898–C916, C918–C927, C930–C944, C947–C959, C949–C966, C981–C995, C998–C1010, C1000–C1017, C1019–C1028, and C1031–C1046. Laminin EGF-like domains are found at residues 514–570 (CQCH…NCKP), 571–636 (CQCH…VCKH), 637–689 (CDCN…CCRP), 690–742 (CDCN…GCEP), 743–790 (CHCN…ACEV), 791–842 (CDCN…LCLP), 843–895 (CNCE…GCQA), 896–946 (CDCD…GCLP), 947–997 (CLCH…RCRP), and 998–1048 (CHCH…ACSK). The N-linked (GlcNAc...) asparagine glycan is linked to N646. Residues N835 and N852 are each glycosylated (N-linked (GlcNAc...) asparagine). Residue N884 is glycosylated (N-linked (GlcNAc...) asparagine). An N-linked (GlcNAc...) asparagine glycan is attached at N940. Residue N1007 is glycosylated (N-linked (GlcNAc...) asparagine). Fibronectin type-III domains are found at residues 1054 to 1142 (PPPR…TKPE), 1146 to 1240 (GHLN…APPQ), 1241 to 1356 (RQEP…SAPV), and 1357 to 1461 (FMAA…AAPA). 6 N-linked (GlcNAc...) asparagine glycosylation sites follow: N1067, N1149, N1170, N1221, N1304, and N1381. Laminin G-like domains follow at residues 1510–1697 (TKGT…WEGC) and 1702–1879 (EEGV…QDGC). Disulfide bonds link C1660–C1697 and C1850–C1879. Fibronectin type-III domains lie at 1857–1943 (TRGA…SAPH), 1945–2042 (VPTP…TPQE), 2043–2132 (APQE…LPPE), 2133–2230 (RVDP…TVPE), 2231–2318 (GVPA…APPE), 2319–2421 (GTVN…MPPG), 2425–2519 (GLLS…TTED), 2520–2613 (KPGP…TPEG), 2614–2709 (IPGP…TRPS), 2713–2806 (GVQP…THPA), 2807–2910 (LPQE…TLAG), 2914–3005 (RGAT…TWEE), 3009–3099 (GMRP…TPSG), 3380–3485 (ATEE…TRED), 3486–3577 (VPQG…TRGV), 3580–3670 (SVPP…AAPQ), 3672–3762 (VWVT…TPED), 3765–3852 (PPCN…TLEA), 3853–3950 (APVG…TLEA), 3951–4054 (PPQD…SAPS), 4055–4143 (GLMN…APPD), 4144–4251 (SQMA…APPD), 4252–4344 (GLSP…ASPA), 4345–4432 (GVSP…APPE), 4433–4517 (DMDP…TSPS), 4518–4620 (APSG…IPPL), 4625–4720 (PHLE…TGPA), 4721–4813 (PPEG…THPA), and 4814–4916 (PPSG…TKKE). Residues 1930 to 1950 (SDWSRGRTLGSAPHSVPTPSR) are disordered.

In terms of assembly, interacts with collagen IV and fibronectin via its laminin EGF-like domains. Interaction with collagen may be required for stable integration into the basement membrane. Interacts with NINL. Interacts with USH1C. Interacts (via the cytoplasmic region) with PDZD7. Component of USH2 complex, composed of ADGRV1, PDZD7, USH2A and WHRN. Interacts with ADGRV1/MASS1 (via N-terminal PDZ domain). Interacts (via the cytoplasmic region) with WHRN. Interacts (via the cytoplasmic region) with VEZT and MYO7A (via MyTH4-FERM domains); the interaction associates VEZT with the USH2 complex at the stereocilia base. As to expression, present in the synaptic terminals of inner ear hair cells (at protein level). Predominantly expressed in the retina and cochlea. Weakly expressed in brain and kidney. Detectable from E17 in the neural epithelium, but not in the retinal pigment epithelium (RPE) of the developing retina. After birth, it is expressed at P7 and remains expressed during adulthood.

It localises to the secreted. It is found in the cell projection. The protein localises to the stereocilium membrane. Its subcellular location is the photoreceptor inner segment. Functionally, involved in hearing and vision as member of the USH2 complex. In the inner ear, required for the hair bundle ankle formation, which connects growing stereocilia in developing cochlear hair cells. In retina photoreceptors, the USH2 complex is required for the maintenance of periciliary membrane complex that seems to play a role in regulating intracellular protein transport. The polypeptide is Usherin (Ush2a) (Rattus norvegicus (Rat)).